We begin with the raw amino-acid sequence, 467 residues long: Argininosuccinate lyase (467 aa).

It belongs to the lyase 1 family. Argininosuccinate lyase subfamily.

The protein resides in the cytoplasm. It catalyses the reaction 2-(N(omega)-L-arginino)succinate = fumarate + L-arginine. It functions in the pathway amino-acid biosynthesis; L-arginine biosynthesis; L-arginine from L-ornithine and carbamoyl phosphate: step 3/3. The sequence is that of Argininosuccinate lyase from Rhizobium etli (strain CIAT 652).